Reading from the N-terminus, the 84-residue chain is Small ribosomal subunit protein bS20 (84 aa).

This sequence belongs to the bacterial ribosomal protein bS20 family.

Functionally, binds directly to 16S ribosomal RNA. The sequence is that of Small ribosomal subunit protein bS20 from Latilactobacillus sakei subsp. sakei (strain 23K) (Lactobacillus sakei subsp. sakei).